The chain runs to 395 residues: Mannan polymerase complexes subunit MNN9 (395 aa).

At serine 2–asparagine 17 the chain is on the cytoplasmic side. A helical; Signal-anchor for type II membrane protein transmembrane segment spans residues isoleucine 18–phenylalanine 33. Residues glutamine 34–histidine 395 are Lumenal-facing.

This sequence belongs to the ANP1/MMN9/VAN1 family. As to quaternary structure, the M-Pol I complex contains MNN9 and VAN1. The M-Pol II complex is composed of ANP1, MNN9, MNN10, MNN11 and HOC1.

Its subcellular location is the endoplasmic reticulum membrane. The protein localises to the golgi apparatus membrane. It functions in the pathway protein modification; protein glycosylation. The M-Pol I and M-Pol II complexes possess alpha-1,6-mannosyltransferase activity and are probably involved in the elongation of the mannan backbone of N-linked glycans on cell wall and periplasmic proteins. May also provide alpha-1,2-mannosyltransferase activity to the M-Pol I complex. This is Mannan polymerase complexes subunit MNN9 (MNN9) from Saccharomyces cerevisiae (strain ATCC 204508 / S288c) (Baker's yeast).